The primary structure comprises 159 residues: MNISIISVGKIKEKFLKAAIDEYSKRLSKYCKLNIIEVADEKTPDNASLKEENIIKEKEGNLILKHIKDNSFVIALDLKGKSITSEEFSDLIENCRLTGNSTIAFVIGGSLGLSQQVLSRANYKLSFSKMTFPHQLFRVMLLEQVYRAFRILCREPYHK.

S-adenosyl-L-methionine-binding positions include Leu76, Gly108, and 127–132 (FSKMTF).

Belongs to the RNA methyltransferase RlmH family. Homodimer.

It is found in the cytoplasm. It carries out the reaction pseudouridine(1915) in 23S rRNA + S-adenosyl-L-methionine = N(3)-methylpseudouridine(1915) in 23S rRNA + S-adenosyl-L-homocysteine + H(+). Functionally, specifically methylates the pseudouridine at position 1915 (m3Psi1915) in 23S rRNA. This Clostridium botulinum (strain ATCC 19397 / Type A) protein is Ribosomal RNA large subunit methyltransferase H.